The following is a 337-amino-acid chain: 1-aminocyclopropane-1-carboxylate deaminase (337 aa).

N6-(pyridoxal phosphate)lysine is present on Lys-50. The active-site Nucleophile is Ser-77.

Belongs to the ACC deaminase/D-cysteine desulfhydrase family. Homotrimer. Requires pyridoxal 5'-phosphate as cofactor.

It carries out the reaction 1-aminocyclopropane-1-carboxylate + H2O = 2-oxobutanoate + NH4(+). Catalyzes a cyclopropane ring-opening reaction, the irreversible conversion of 1-aminocyclopropane-1-carboxylate (ACC) to ammonia and alpha-ketobutyrate. Allows growth on ACC as a nitrogen source. This Rhizobium rhizogenes (strain K84 / ATCC BAA-868) (Agrobacterium radiobacter) protein is 1-aminocyclopropane-1-carboxylate deaminase.